Here is a 57-residue protein sequence, read N- to C-terminus: Small polypeptide DEVIL 20 (57 aa).

An N-linked (GlcNAc...) asparagine glycan is attached at Asn-5. Positions 16–47 are required for DVL/RTFL small polypeptide activity; that stretch reads TFKAKCSHMVRKQRAKFYILGRCLAMLVCGRG. A helical transmembrane segment spans residues 29–45; that stretch reads RAKFYILGRCLAMLVCG.

It belongs to the DVL/RTFL small polypeptides family.

The protein localises to the cell membrane. In terms of biological role, small polypeptide acting as a regulatory molecule which coordinates cellular responses required for differentiation, growth and development, probably by restricting polar cell proliferation in lateral organs and coordinating socket cell recruitment and differentiation at trichome sites. The chain is Small polypeptide DEVIL 20 from Arabidopsis thaliana (Mouse-ear cress).